We begin with the raw amino-acid sequence, 2873 residues long: Fibrillin-1 (2873 aa).

The signal sequence occupies residues 1 to 24 (MRRGGLLEVALAFALLLESYTSHG). Residues 25 to 44 (ADANLEAGSLKETRANRAKR) constitute a propeptide that is removed on maturation. The segment at 45–81 (RGGGGHDALKGPNVCGSRYNAYCCPGWKTLPGGNQCI) is fibrillin unique N-terminal (FUN) domain. An N-terminal domain region spans residues 45–452 (RGGGGHDALK…PPRVLPFNVT (408 aa)). 11 disulfide bridges follow: Cys59–Cys68, Cys67–Cys80, Cys85–Cys94, Cys89–Cys100, Cys102–Cys111, Cys119–Cys129, Cys123–Cys134, Cys136–Cys145, Cys150–Cys160, Cys154–Cys166, and Cys168–Cys177. 3 EGF-like domains span residues 81–112 (IVPICRHSCGDGFCSRPNMCTCPSGQISPSCG), 115–146 (SIQHCSIRCMNGGSCSDDHCLCQKGYIGTHCG), and 147–178 (QPVCESGCLNGGRCVAPNRCACTYGFTGPQCE). Positions 119 to 329 (CSIRCMNGGS…YTSPDGTRCV (211 aa)) are interaction with MFAP4. The 53-residue stretch at 184-236 (GPCFTVVSNQMCQGQLSGIVCTKTLCCATVGRAWGHPCEMCPAQPHPCRRGFI) folds into the TB 1 domain. Residues 195–221 (CQGQLSGIVCTKTLCCATVGRAWGHPC) form a hybrid domain 1 region. One can recognise an EGF-like 4; calcium-binding domain in the interval 246–287 (DVDECQAIPGMCQGGNCINTVGSFECKCPAGHKFNEVSQKCE). 6 disulfides stabilise this stretch: Cys250–Cys262, Cys257–Cys271, Cys273–Cys286, Cys292–Cys304, Cys299–Cys313, and Cys315–Cys328. O-linked (Glc) serine glycosylation occurs at Ser268. In terms of domain architecture, EGF-like 5; calcium-binding spans 288–329 (DIDECSTIPGVCDGGECTNTVSSYFCKCPPGFYTSPDGTRCV). The TB 2 domain maps to 334–389 (GYCYTALANGRCSNQLPQSITKMQCCCDLGRCWSPGVTVAPEMCPIRSTEDFNKLC). Asn450 carries N-linked (GlcNAc...) asparagine glycosylation. Positions 451–491 (VTDYCQLVRYLCQNGRCIPTPGSYRCECNKGFQLDIRGECI) constitute an EGF-like 6 domain. Disulfide bonds link Cys455–Cys467, Cys462–Cys476, Cys478–Cys490, Cys496–Cys506, Cys501–Cys515, Cys517–Cys530, Cys536–Cys548, Cys543–Cys557, Cys559–Cys572, Cys578–Cys589, Cys584–Cys598, Cys600–Cys613, Cys619–Cys630, Cys625–Cys639, and Cys641–Cys654. Ser473 carries O-linked (Glc) serine glycosylation. Positions 492–531 (DVDECEKNPCTGGECINNQGSYTCHCRAGYQSTLTRTECR) constitute an EGF-like 7; calcium-binding domain. An O-linked (Glc) serine glycan is attached at Ser512. One can recognise an EGF-like 8; calcium-binding domain in the interval 532–573 (DIDECLQNGRICNNGRCINTDGSFHCVCNAGFHVTRDGKNCE). The EGF-like 9; calcium-binding domain occupies 574–614 (DMDECSIRNMCLNGMCINEDGSFKCICKPGFQLASDGRYCK). The EGF-like 10; calcium-binding domain occupies 615 to 655 (DINECETPGICMNGRCVNTDGSYRCECFPGLAVGLDGRVCV). The TB 3 domain maps to 661-713 (STCYGGYRRGQCVKPLFGAVTKSECCCASTEYAFGEPCQPCPAQNSAEYQALC). Residues 725–766 (DINECALDPDICPNGICENLRGTYKCICNSGYEVDITGKNCV) enclose the EGF-like 11; calcium-binding domain. 16 cysteine pairs are disulfide-bonded: Cys729-Cys741, Cys736-Cys750, Cys752-Cys765, Cys771-Cys783, Cys778-Cys792, Cys794-Cys807, Cys813-Cys823, Cys818-Cys832, Cys834-Cys847, Cys855-Cys877, Cys864-Cys889, Cys878-Cys892, Cys898-Cys910, Cys916-Cys928, Cys923-Cys937, and Cys939-Cys952. Residues 767–808 (DINECVLNSLLCDNGQCRNTPGSFVCTCPKGFVYKPDLKTCE) form the EGF-like 12; calcium-binding domain. The EGF-like 13; calcium-binding domain maps to 809 to 848 (DIDECESSPCINGVCKNSPGSFICECSPESTLDPTKTICI). The 52-residue stretch at 853–904 (GTCWQTVIDGRCEININGATLKSECCSSLGAAWGSPCTICQLDPICGKGFSR) folds into the TB 4 domain. The interval 862–887 (GRCEININGATLKSECCSSLGAAWGS) is hybrid domain 2. Residues 912 to 953 (DINECEVFPGVCKNGLCVNSRGSFKCECPNGMTLDATGRICL) form the EGF-like 14; calcium-binding domain. One can recognise a TB 5 domain in the interval 958–1010 (ETCFLKYDDEECTLPIAGRHRMDACCCSVGAAWGTEECEECPLRNSREYEELC). The 42-residue stretch at 1030 to 1071 (DINECKMIPSLCTHGKCRNTIGSFKCRCDSGFALDSEERNCT) folds into the EGF-like 15; calcium-binding domain. 46 cysteine pairs are disulfide-bonded: Cys1034-Cys1046, Cys1041-Cys1055, Cys1057-Cys1070, Cys1076-Cys1088, Cys1083-Cys1097, Cys1099-Cys1113, Cys1119-Cys1131, Cys1126-Cys1140, Cys1142-Cys1155, Cys1161-Cys1173, Cys1168-Cys1182, Cys1184-Cys1197, Cys1203-Cys1214, Cys1210-Cys1223, Cys1225-Cys1238, Cys1244-Cys1256, Cys1251-Cys1265, Cys1267-Cys1280, Cys1286-Cys1298, Cys1293-Cys1307, Cys1309-Cys1322, Cys1328-Cys1341, Cys1335-Cys1350, Cys1352-Cys1363, Cys1369-Cys1382, Cys1376-Cys1391, Cys1393-Cys1404, Cys1410-Cys1422, Cys1417-Cys1431, Cys1433-Cys1446, Cys1452-Cys1463, Cys1458-Cys1472, Cys1474-Cys1487, Cys1493-Cys1504, Cys1499-Cys1513, Cys1515-Cys1528, Cys1536-Cys1564, Cys1551-Cys1576, Cys1565-Cys1579, Cys1566-Cys1591, Cys1612-Cys1624, Cys1619-Cys1633, Cys1635-Cys1648, Cys1654-Cys1665, Cys1660-Cys1674, and Cys1676-Cys1689. Asn1069 is a glycosylation site (N-linked (GlcNAc...) asparagine). The EGF-like 16; calcium-binding domain occupies 1072-1114 (DIDECRISPDLCGRGQCVNTPGDFECKCDEGYESGFMMMKNCM). The EGF-like 17; calcium-binding domain occupies 1115-1156 (DIDECQRDPLLCRGGICHNTEGSYRCECPPGHQLSPNISACI). Ser1137 carries O-linked (Glc) serine glycosylation. Asn1151 carries N-linked (GlcNAc...) asparagine glycosylation. In terms of domain architecture, EGF-like 18; calcium-binding spans 1157-1198 (DINECELSANLCPHGRCVNLIGKYQCACNPGYHPTHDRLFCV). The EGF-like 19; calcium-binding domain occupies 1199 to 1239 (DIDECSIMNGGCETFCTNSDGSYECSCQPGFALMPDQRSCT). A glycan (O-linked (Glc) serine) is linked at Ser1220. Positions 1240 to 1281 (DIDECEDNPNICDGGQCTNIPGEYRCLCYDGFMASEDMKTCV) constitute an EGF-like 20; calcium-binding domain. Residues 1282-1323 (DVNECDLNPNICLSGTCENTKGSFICHCDMGYSGKKGKTGCT) form the EGF-like 21; calcium-binding domain. An O-linked (Glc) serine glycan is attached at Ser1304. The 41-residue stretch at 1324 to 1364 (DINECEIGAHNCGRHAVCTNTAGSFKCSCSPGWIGDGIKCT) folds into the EGF-like 22; calcium-binding domain. Ser1347 carries an O-linked (Glc) serine glycan. Residues 1365–1405 (DLDECSNGTHMCSQHADCKNTMGSYRCLCKDGYTGDGFTCT) enclose the EGF-like 23; calcium-binding domain. An N-linked (GlcNAc...) asparagine glycan is attached at Asn1371. O-linked (Glc) serine glycosylation occurs at Ser1388. Positions 1406 to 1447 (DLDECSENLNLCGNGQCLNAPGGYRCECDMGFVPSADGKACE) constitute an EGF-like 24; calcium-binding domain. The EGF-like 25; calcium-binding domain maps to 1448 to 1488 (DIDECSLPNICVFGTCHNLPGLFRCECEIGYELDRSGGNCT). A glycan (N-linked (GlcNAc...) asparagine) is linked at Asn1486. An EGF-like 26; calcium-binding domain is found at 1489–1529 (DVNECLDPTTCISGNCVNTPGSYTCDCPPDFELNPTRVGCV). The O-linked (Glc) serine glycan is linked to Ser1510. Positions 1530-2733 (DTRSGNCYLD…GYPKRGRKRR (1204 aa)) are C-terminal domain. The TB 6 domain occupies 1534-1591 (GNCYLDIRPRGDNGDTACSNEIGVGVSKASCCCSLGKAWGTPCELCPSVNTSEYKILC). The Cell attachment site motif lies at 1543 to 1545 (RGD). N-linked (GlcNAc...) asparagine glycosylation is present at Asn1583. The EGF-like 27; calcium-binding domain occupies 1608-1649 (DIDECQELPGLCQGGKCINTFGSFQCRCPTGYYLNEDTRVCD). O-linked (Glc) serine glycosylation is present at Ser1630. The EGF-like 28; calcium-binding domain maps to 1650–1690 (DVNECETPGICGPGTCYNTVGNYTCICPPDYMQVNGGNNCM). Asn1671 is a glycosylation site (N-linked (GlcNAc...) asparagine). In terms of domain architecture, TB 7 spans 1695–1750 (SLCYRNYYADNQTCDGELLFNMTKKMCCCSYNIGRAWNKPCEQCPIPSTDEFATLC). Residues Asn1705 and Asn1715 are each glycosylated (N-linked (GlcNAc...) asparagine). One can recognise an EGF-like 29; calcium-binding domain in the interval 1768-1809 (DIDECREIPGVCENGVCINMVGSFRCECPVGFFYNDKLLVCE). Disulfide bonds link Cys1772–Cys1784, Cys1779–Cys1793, Cys1795–Cys1808, Cys1814–Cys1826, Cys1820–Cys1835, Cys1837–Cys1849, Cys1855–Cys1867, Cys1862–Cys1876, Cys1878–Cys1891, Cys1897–Cys1907, Cys1902–Cys1916, Cys1918–Cys1930, Cys1936–Cys1949, Cys1944–Cys1958, Cys1960–Cys1973, Cys1979–Cys1991, Cys1986–Cys2000, Cys2002–Cys2013, Cys2019–Cys2031, Cys2026–Cys2040, Cys2042–Cys2055, Cys2063–Cys2085, Cys2072–Cys2098, Cys2086–Cys2101, Cys2087–Cys2113, Cys2133–Cys2144, Cys2139–Cys2153, Cys2155–Cys2166, Cys2172–Cys2183, Cys2178–Cys2192, Cys2194–Cys2206, Cys2212–Cys2223, Cys2219–Cys2232, Cys2234–Cys2247, Cys2253–Cys2267, Cys2260–Cys2276, Cys2278–Cys2291, Cys2297–Cys2309, Cys2304–Cys2318, and Cys2320–Cys2333. Residues 1810–1850 (DIDECQNGPVCQRNAECINTAGSYRCDCKPGYRLTSTGQCN) enclose the EGF-like 30; calcium-binding domain. The O-linked (Glc) serine glycan is linked to Ser1832. An EGF-like 31; calcium-binding domain is found at 1851-1892 (DRNECQEIPNICSHGQCIDTVGSFYCLCHTGFKTNVDQTMCL). An O-linked (Glc) serine glycan is attached at Ser1873. Residues 1893 to 1931 (DINECERDACGNGTCRNTIGSFNCRCNHGFILSHNNDCI) form the EGF-like 32; calcium-binding domain. N-linked (GlcNAc...) asparagine glycosylation is present at Asn1904. Residue Ser1913 is glycosylated (O-linked (Glc) serine). An EGF-like 33; calcium-binding domain is found at 1932–1974 (DVDECATGNGNLCRNGQCVNTVGSFQCRCNEGYEVAPDGRTCV). A glycan (O-linked (Glc) serine) is linked at Ser1955. In terms of domain architecture, EGF-like 34; calcium-binding spans 1975–2014 (DINECVLDPGKCAPGTCQNLDGSYRCICPPGYSLQNDKCE). The EGF-like 35; calcium-binding domain occupies 2015 to 2056 (DIDECVEEPEICALGTCSNTEGSFKCLCPEGFSLSSTGRRCQ). A glycan (O-linked (Glc) serine) is linked at Ser2037. A TB 8 domain is found at 2061–2113 (SYCYAKFEGGKCSSPKSRNHSKQECCCALKGEGWGDPCELCPTEPDEAFRQIC). A glycan (N-linked (GlcNAc...) asparagine) is linked at Asn2079. The region spanning 2129–2167 (DMDECKEPDVCRHGQCINTDGSYRCECPFGYILEGNECV) is the EGF-like 36; calcium-binding domain. Ser2150 carries O-linked (Glc) serine glycosylation. Residues 2168-2207 (DTDECSVGNPCGNGTCKNVIGGFECTCEEGFEPGPMMTCE) enclose the EGF-like 37; calcium-binding domain. N-linked (GlcNAc...) asparagine glycosylation occurs at Asn2180. Residues 2208 to 2248 (DINECAQNPLLCAFRCVNTYGSYECKCPVGYVLREDRRMCK) enclose the EGF-like 38; calcium-binding domain. An O-linked (Glc) serine glycan is attached at Ser2229. In terms of domain architecture, EGF-like 39; calcium-binding spans 2249-2292 (DEDECAEGKHDCTEKQMECKNLIGTYMCICGPGYQRRPDGEGCI). The region spanning 2293–2334 (DENECQTKPGICENGRCLNTLGSYTCECNDGFTASPTQDECL) is the EGF-like 40; calcium-binding domain. An O-linked (Glc) serine glycan is attached at Ser2315. The region spanning 2339-2392 (GYCFSEVLQNMCQIGSSNRNPVTKSECCCDGGRGWGPHCEICPFEGTVAYKKLC) is the TB 9 domain. The EGF-like 41; calcium-binding domain occupies 2404-2445 (DIDECKVIHDVCRNGECVNDRGSYHCICKTGYTPDITGTACV). 21 disulfides stabilise this stretch: Cys2408-Cys2420, Cys2415-Cys2429, Cys2431-Cys2444, Cys2450-Cys2461, Cys2457-Cys2470, Cys2472-Cys2485, Cys2491-Cys2502, Cys2498-Cys2511, Cys2513-Cys2524, Cys2530-Cys2543, Cys2537-Cys2552, Cys2554-Cys2567, Cys2573-Cys2583, Cys2579-Cys2592, Cys2594-Cys2607, Cys2613-Cys2624, Cys2619-Cys2633, Cys2635-Cys2648, Cys2654-Cys2665, Cys2661-Cys2674, and Cys2676-Cys2688. Positions 2446–2486 (DLNECNQAPKPCNFICKNTEGSYQCSCPKGYILQEDGRSCK) constitute an EGF-like 42; calcium-binding domain. Ser2467 carries O-linked (Glc) serine glycosylation. The 39-residue stretch at 2487-2525 (DLDECATKQHNCQFLCVNTIGGFTCKCPPGFTQHHTACI) folds into the EGF-like 43; calcium-binding domain. The region spanning 2526-2568 (DNNECTSDINLCGSKGVCQNTPGSFTCECQRGFSLDQSGASCE) is the EGF-like 44; calcium-binding domain. A glycan (O-linked (Glc) serine) is linked at Ser2549. The 40-residue stretch at 2569–2608 (DVDECEGNHRCQHGCQNIIGGYRCSCPQGYLQHYQWNQCV) folds into the EGF-like 45; calcium-binding domain. One can recognise an EGF-like 46; calcium-binding domain in the interval 2609–2649 (DENECLSAHVCGGASCHNTLGSYKCMCPTGFQYEQFSGGCQ). An O-linked (Glc) serine glycan is attached at Ser2630. In terms of domain architecture, EGF-like 47; calcium-binding spans 2650-2689 (DINECGSSQAPCSYGCSNTEGGYLCGCPPGYFRIGQGHCV). Phosphoserine is present on residues Ser2704, Ser2705, and Ser2711. The segment at 2728–2747 (RGRKRRSTNETDASDIQDGS) is disordered. N-linked (GlcNAc...) asparagine glycans are attached at residues Asn2736, Asn2752, and Asn2769.

It belongs to the fibrillin family. Interacts with COL16A1. Interacts with integrin alpha-V/beta-3. Interacts with ADAMTS10; this interaction promotes microfibril assembly. Interacts with THSD4; this interaction promotes fibril formation. Interacts (via N-terminal domain) with FBLN2 and FBLN5. Interacts with ELN. Forms a ternary complex with ELN and FBLN2 or FBLN5 and a significant interaction with ELN seen only in the presence of FBLN2 or FBLN5. Interacts (via N-terminal domain) with LTBP2 (via C-terminal domain) in a Ca(+2)-dependent manner. Interacts (via N-terminal domain) with LTBP1 (via C-terminal domain). Interacts with integrins ITGA5:ITGB1, ITGAV:ITGB3 and ITGAV:ITGB6. Interacts (via N-terminal domain) with BMP2, BMP4, BMP7, BMP10 and GDF5. Interacts (via N-terminal domain) with MFAP2 and MFAP5. Interacts with ADAMTSL5. Interacts with MFAP4. Interacts (via N-terminal domain) with TNFSF11 in a Ca(+2)-dependent manner. Interacts (via N-terminal domain) with EFEMP2; this interaction inhibits EFEMP2 binding to LOX and ELN. Post-translationally, cleavage of N- and C-terminus by furin is required for incorporation into the extracellular matrix and assembly into microfibrils. The C-terminus, which corresponds to the Asprosin chain, was initially thought to constitute a propeptide. Fibrillin-1 and Asprosin chains are still linked together during the secretion from cells, but are subsequently separated by furin, an essential step for incorporation of Fibrillin-1 into the nascent microfibrils. Forms intermolecular disulfide bonds either with other fibrillin-1 molecules or with other components of the microfibrils. In terms of processing, O-glycosylated on serine residues by POGLUT2 and POGLUT3 which is necessary for efficient protein secretion. In terms of tissue distribution, strongly expressed during the first week of osteoblast differentiation. Secreted by white adipose tissue (at protein level).

It localises to the secreted. Its subcellular location is the extracellular space. It is found in the extracellular matrix. Structural component of the 10-12 nm diameter microfibrils of the extracellular matrix, which conveys both structural and regulatory properties to load-bearing connective tissues. Fibrillin-1-containing microfibrils provide long-term force bearing structural support. In tissues such as the lung, blood vessels and skin, microfibrils form the periphery of the elastic fiber, acting as a scaffold for the deposition of elastin. In addition, microfibrils can occur as elastin-independent networks in tissues such as the ciliary zonule, tendon, cornea and glomerulus where they provide tensile strength and have anchoring roles. Fibrillin-1 also plays a key role in tissue homeostasis through specific interactions with growth factors, such as the bone morphogenetic proteins (BMPs), growth and differentiation factors (GDFs) and latent transforming growth factor-beta-binding proteins (LTBPs), cell-surface integrins and other extracellular matrix protein and proteoglycan components. Regulates osteoblast maturation by controlling TGF-beta bioavailability and calibrating TGF-beta and BMP levels, respectively. Negatively regulates osteoclastogenesis by binding and sequestering an osteoclast differentiation and activation factor TNFSF11. This leads to disruption of TNFSF11-induced Ca(2+) signaling and impairment of TNFSF11-mediated nuclear translocation and activation of transcription factor NFATC1 which regulates genes important for osteoclast differentiation and function. Mediates cell adhesion via its binding to cell surface receptors integrins ITGAV:ITGB3 and ITGA5:ITGB1. Binds heparin and this interaction plays an important role in the assembly of microfibrils. Its function is as follows. Adipokine secreted by white adipose tissue that plays an important regulatory role in the glucose metabolism of liver, muscle and pancreas. Hormone that targets the liver in response to fasting to increase plasma glucose levels. Binds the olfactory receptor Olfr734 at the surface of hepatocytes and promotes hepatocyte glucose release by activating the protein kinase A activity in the liver, resulting in rapid glucose release into the circulation. May act as a regulator of adaptive thermogenesis by inhibiting browning and energy consumption, while increasing lipid deposition in white adipose tissue. Also acts as an orexigenic hormone that increases appetite: crosses the blood brain barrier and exerts effects on the hypothalamus. In the arcuate nucleus of the hypothalamus, asprosin directly activates orexigenic AgRP neurons and indirectly inhibits anorexigenic POMC neurons, resulting in appetite stimulation. Activates orexigenic AgRP neurons via binding to the olfactory receptor Olfr734. May also play a role in sperm motility in testis via interaction with Olfr734 receptor. In Mus musculus (Mouse), this protein is Fibrillin-1.